The chain runs to 140 residues: Class I hydrophobin B (140 aa).

Residues 1-16 (MKFLAVVSLLAATALA) form the signal peptide. 4 cysteine pairs are disulfide-bonded: cysteine 42-cysteine 113, cysteine 50-cysteine 107, cysteine 51-cysteine 88, and cysteine 114-cysteine 133. N-linked (GlcNAc...) asparagine glycosylation is present at asparagine 117.

The protein belongs to the fungal hydrophobin family. As to quaternary structure, self-assembles to form functional amyloid fibrils called rodlets. Self-assembly into fibrillar rodlets occurs spontaneously at hydrophobic:hydrophilic interfaces and the rodlets further associate laterally to form amphipathic monolayers.

The protein resides in the secreted. It is found in the spore wall. Functionally, aerial growth, conidiation, and dispersal of filamentous fungi in the environment rely upon a capability of their secreting small amphipathic proteins called hydrophobins (HPBs) with low sequence identity. Class I can self-assemble into an outermost layer of rodlet bundles on aerial cell surfaces, conferring cellular hydrophobicity that supports fungal growth, development and dispersal; whereas Class II form highly ordered films at water-air interfaces through intermolecular interactions but contribute nothing to the rodlet structure. RodB is a class I hydrophobin that, unlike rodA, is not required for rodlet formation. In Aspergillus fumigatus (strain ATCC MYA-4609 / CBS 101355 / FGSC A1100 / Af293) (Neosartorya fumigata), this protein is Class I hydrophobin B.